A 481-amino-acid polypeptide reads, in one-letter code: Argininosuccinate lyase (481 aa).

The protein belongs to the lyase 1 family. Argininosuccinate lyase subfamily.

It is found in the cytoplasm. It catalyses the reaction 2-(N(omega)-L-arginino)succinate = fumarate + L-arginine. It participates in amino-acid biosynthesis; L-arginine biosynthesis; L-arginine from L-ornithine and carbamoyl phosphate: step 3/3. This is Argininosuccinate lyase from Methanococcus maripaludis (strain C7 / ATCC BAA-1331).